The primary structure comprises 133 residues: Probable mitochondrial pyruvate carrier 2 (133 aa).

The next 3 helical transmembrane spans lie at 39–55 (VTNL…IVPI), 73–91 (ASSL…TLIS), and 99–116 (MLAA…YNIY).

It belongs to the mitochondrial pyruvate carrier (MPC) (TC 2.A.105) family.

The protein resides in the mitochondrion inner membrane. May mediate the uptake of pyruvate into mitochondria. The chain is Probable mitochondrial pyruvate carrier 2 from Dictyostelium discoideum (Social amoeba).